A 376-amino-acid polypeptide reads, in one-letter code: Putative aryl-alcohol dehydrogenase AAD14 (376 aa).

Catalysis depends on Tyr76, which acts as the Proton donor. Substrate is bound at residue His151. 236–246 contacts NADP(+); that stretch reads DVMGGGRFQSK.

This sequence belongs to the aldo/keto reductase family. Aldo/keto reductase 2 subfamily.

This Saccharomyces cerevisiae (strain ATCC 204508 / S288c) (Baker's yeast) protein is Putative aryl-alcohol dehydrogenase AAD14 (AAD14).